A 380-amino-acid chain; its full sequence is Cytochrome b (380 aa).

Helical transmembrane passes span 34 to 54 (FGSL…LLAM), 78 to 99 (WLIR…FLHI), 114 to 134 (WNTG…GYVL), and 179 to 199 (FFAL…THLM). Heme b-binding residues include His84 and His98. Residues His183 and His197 each contribute to the heme b site. Residue His202 coordinates a ubiquinone. 4 helical membrane-spanning segments follow: residues 227–247 (LKDI…ALFS), 289–309 (LGGV…PFLH), 321–341 (LSQT…WVGS), and 348–368 (FIII…ILFP).

Belongs to the cytochrome b family. The cytochrome bc1 complex contains 11 subunits: 3 respiratory subunits (MT-CYB, CYC1 and UQCRFS1), 2 core proteins (UQCRC1 and UQCRC2) and 6 low-molecular weight proteins (UQCRH/QCR6, UQCRB/QCR7, UQCRQ/QCR8, UQCR10/QCR9, UQCR11/QCR10 and a cleavage product of UQCRFS1). This cytochrome bc1 complex then forms a dimer. Requires heme b as cofactor.

It is found in the mitochondrion inner membrane. Component of the ubiquinol-cytochrome c reductase complex (complex III or cytochrome b-c1 complex) that is part of the mitochondrial respiratory chain. The b-c1 complex mediates electron transfer from ubiquinol to cytochrome c. Contributes to the generation of a proton gradient across the mitochondrial membrane that is then used for ATP synthesis. In Tragopan satyra (Satyr tragopan), this protein is Cytochrome b (MT-CYB).